Here is a 99-residue protein sequence, read N- to C-terminus: Aspartyl/glutamyl-tRNA(Asn/Gln) amidotransferase subunit C (99 aa).

This sequence belongs to the GatC family. As to quaternary structure, heterotrimer of A, B and C subunits.

The catalysed reaction is L-glutamyl-tRNA(Gln) + L-glutamine + ATP + H2O = L-glutaminyl-tRNA(Gln) + L-glutamate + ADP + phosphate + H(+). The enzyme catalyses L-aspartyl-tRNA(Asn) + L-glutamine + ATP + H2O = L-asparaginyl-tRNA(Asn) + L-glutamate + ADP + phosphate + 2 H(+). Its function is as follows. Allows the formation of correctly charged Asn-tRNA(Asn) or Gln-tRNA(Gln) through the transamidation of misacylated Asp-tRNA(Asn) or Glu-tRNA(Gln) in organisms which lack either or both of asparaginyl-tRNA or glutaminyl-tRNA synthetases. The reaction takes place in the presence of glutamine and ATP through an activated phospho-Asp-tRNA(Asn) or phospho-Glu-tRNA(Gln). This Mycobacterium leprae (strain Br4923) protein is Aspartyl/glutamyl-tRNA(Asn/Gln) amidotransferase subunit C.